A 994-amino-acid polypeptide reads, in one-letter code: Myosin IA heavy chain (994 aa).

The Myosin motor domain occupies 12–720; the sequence is VGVEDLIMLT…PLFLLEDKRN (709 aa). 105-112 contacts ATP; it reads GESGAGKT. The interval 574–654 is actin-binding; the sequence is TFIPTDKKRP…RAGYCYRQTF (81 aa). IQ domains follow at residues 723–744 and 745–774; these read LNDL…KWYL and RTLA…QSIS. The 189-residue stretch at 782–970 folds into the TH1 domain; that stretch reads RNRQSIKLSK…ANSPSFTAKA (189 aa).

This sequence belongs to the TRAFAC class myosin-kinesin ATPase superfamily. Myosin family. Myosin I heavy chain is single-headed. Dimer of a heavy and a light chain. Inability to self-assemble into filaments.

Its function is as follows. Actin-based motor protein, possibly involved in a wide range of motile processes, such as cell movement across a surface, and extension and retraction of pseudopodia or lamellipodia. The polypeptide is Myosin IA heavy chain (myoA) (Dictyostelium discoideum (Social amoeba)).